The following is a 491-amino-acid chain: Probable glycine dehydrogenase (decarboxylating) subunit 2 (491 aa).

Lysine 273 is subject to N6-(pyridoxal phosphate)lysine.

It belongs to the GcvP family. C-terminal subunit subfamily. As to quaternary structure, the glycine cleavage system is composed of four proteins: P, T, L and H. In this organism, the P 'protein' is a heterodimer of two subunits. It depends on pyridoxal 5'-phosphate as a cofactor.

It catalyses the reaction N(6)-[(R)-lipoyl]-L-lysyl-[glycine-cleavage complex H protein] + glycine + H(+) = N(6)-[(R)-S(8)-aminomethyldihydrolipoyl]-L-lysyl-[glycine-cleavage complex H protein] + CO2. The glycine cleavage system catalyzes the degradation of glycine. The P protein binds the alpha-amino group of glycine through its pyridoxal phosphate cofactor; CO(2) is released and the remaining methylamine moiety is then transferred to the lipoamide cofactor of the H protein. The chain is Probable glycine dehydrogenase (decarboxylating) subunit 2 from Bacillus cereus (strain G9842).